Reading from the N-terminus, the 483-residue chain is Zinc metalloproteinase/disintegrin (483 aa).

Positions M1–S20 are cleaved as a signal peptide. A propeptide spanning residues I21–P190 is cleaved from the precursor. Residues R198–P394 enclose the Peptidase M12B domain. E201 and D285 together coordinate Ca(2+). 3 disulfide bridges follow: C309–C389, C349–C373, and C351–C356. H334 provides a ligand contact to Zn(2+). The active site involves E335. Positions 338 and 344 each coordinate Zn(2+). 2 residues coordinate Ca(2+): C389 and N392. The propeptide occupies L395 to F418. A Disintegrin domain is found at T402–A483. 4 disulfides stabilise this stretch: C425/C448, C439/C445, C444/C469, and C457/C476. The short motif at R461–D463 is the Cell attachment site element.

Belongs to the venom metalloproteinase (M12B) family. P-II subfamily. P-IId sub-subfamily. Homodimer; disulfide-linked (disintegrin). Zn(2+) is required as a cofactor. As to expression, expressed by the venom gland.

It is found in the secreted. Impairs hemostasis in the envenomed animal. This protein has not been identified in the venom. Functionally, inhibits ADP-induced platelet aggregation. Binds and inhibits integrins GPIIb/GPIIIa (ITGA2B/ITGB3), alpha-5/beta-1 (ITGA5/ITGB1), alpha-V/beta-3 (ITGAV/ITGB3), and alpha-V/beta-5 (ITGAV/ITGB5). It blocks cancer cell adhesion (tested on human breast cancer cell line MDA-MB-435) to fibronectin and vitronectin and thus prevents invasion of cancer cells. This Agkistrodon contortrix contortrix (Southern copperhead) protein is Zinc metalloproteinase/disintegrin.